The chain runs to 219 residues: UPF0502 protein HCH_06091 (219 aa).

Belongs to the UPF0502 family.

The chain is UPF0502 protein HCH_06091 from Hahella chejuensis (strain KCTC 2396).